Reading from the N-terminus, the 178-residue chain is MSRIGNKVIVLPAGVELANNDNVVTVKGSKGELTREFSKDIEIRVEGTEITLHRPNDSKEMKTIHGTTRALLNNMVVGVSEGFKKELEMRGVGYRAQLQGSKLVLAVGKSHPDEVEAPEGITFELPNPTTIVVSGISKEVVGQTAAYVRSLRSPEPYKGKGIRYVGEFVRRKEGKTGK.

Belongs to the universal ribosomal protein uL6 family. Part of the 50S ribosomal subunit.

In terms of biological role, this protein binds to the 23S rRNA, and is important in its secondary structure. It is located near the subunit interface in the base of the L7/L12 stalk, and near the tRNA binding site of the peptidyltransferase center. In Streptococcus pneumoniae serotype 4 (strain ATCC BAA-334 / TIGR4), this protein is Large ribosomal subunit protein uL6.